We begin with the raw amino-acid sequence, 205 residues long: Anaerobic dimethyl sulfoxide reductase chain B (205 aa).

4Fe-4S ferredoxin-type domains are found at residues 5–33 (YGFF…LTPE), 59–89 (FAYY…KRED), and 90–119 (GFVV…YNET). Residues cysteine 14, cysteine 17, cysteine 20, cysteine 24, cysteine 67, cysteine 70, cysteine 75, cysteine 79, cysteine 99, cysteine 102, cysteine 105, cysteine 109, cysteine 126, cysteine 129, cysteine 141, and cysteine 145 each contribute to the [4Fe-4S] cluster site. A disordered region spans residues 184–205 (KPNANSRPTGDTTGYLANPKEV). The segment covering 186–195 (NANSRPTGDT) has biased composition (polar residues).

As to quaternary structure, heterotrimeric enzyme composed of a catalytic heterodimer (DmsAB) and a membrane anchor protein (DmsC). [4Fe-4S] cluster is required as a cofactor.

In terms of biological role, electron transfer subunit of the terminal reductase during anaerobic growth on various sulfoxide and N-oxide compounds. The sequence is that of Anaerobic dimethyl sulfoxide reductase chain B (dmsB) from Escherichia coli (strain K12).